Reading from the N-terminus, the 339-residue chain is uncharacterized protein (339 aa).

2 VOC domains span residues 2 to 127 (EFDY…VRSE) and 141 to 276 (TIDH…CLEI). Fe cation contacts are provided by H144, H222, and E306.

It belongs to the 4HPPD family. It depends on Fe cation as a cofactor.

This is an uncharacterized protein from Synechocystis sp. (strain ATCC 27184 / PCC 6803 / Kazusa).